Here is a 950-residue protein sequence, read N- to C-terminus: 5'-3' exoribonuclease 2 (950 aa).

A CCHC-type zinc finger spans residues 262-278 (PCGLCNQFGHEVKDCEG). At Lys286 the chain carries N6-acetyllysine. The segment at 408 to 508 (KDDEDSFRRR…SDSEPEPEDN (101 aa)) is disordered. Positions 416 to 426 (RRQKEKRKRMK) are enriched in basic residues. Residue Thr439 is modified to Phosphothreonine. Residues 445–458 (SRNSPGSQVASNPR) are compositionally biased toward polar residues. Residues Ser448, Ser471, Ser473, Ser475, Ser482, Ser487, Ser499, Ser501, and Ser678 each carry the phosphoserine modification. Residues 468-482 (NNSSPSISPNTSFTS) are compositionally biased toward low complexity. 3 positions are modified to asymmetric dimethylarginine; alternate: Arg824, Arg847, and Arg851. 3 positions are modified to omega-N-methylarginine; alternate: Arg824, Arg847, and Arg851. Arg880 carries the post-translational modification Asymmetric dimethylarginine. Arg883 bears the Asymmetric dimethylarginine; alternate mark. The residue at position 883 (Arg883) is an Omega-N-methylarginine; alternate. Arg895 is subject to Omega-N-methylarginine. The tract at residues 911-950 (MLAGPGGYPPRRDDRGGRQGYPREGRKYPLPPPSGRYNWN) is disordered. Over residues 920–937 (PRRDDRGGRQGYPREGRK) the composition is skewed to basic and acidic residues. Arg946 is subject to Asymmetric dimethylarginine; alternate. Arg946 carries the post-translational modification Omega-N-methylarginine; alternate.

The protein belongs to the 5'-3' exonuclease family. XRN2/RAT1 subfamily. Interacts with POLR2A and SMN1/SMN2. Interacts with CDKN2AIP and NKRF. Interacts with CDKN2AIPNL; the interaction is direct. Interacts with TRIM71 (via NHL repeats) in an RNA-dependent manner. Interacts with DHX34; the interaction is RNA-independent. In terms of tissue distribution, expressed in the spleen, thymus, prostate, testis, ovary, small intestine, colon, peripheral blood leukocytes, heart, brain, placenta, lung, liver, skeletal muscle, kidney, and pancreas. Isoform 2 is expressed predominantly in peripheral blood leukocytes.

It localises to the nucleus. It is found in the nucleolus. Its function is as follows. Possesses 5'-&gt;3' exoribonuclease activity. May promote the termination of transcription by RNA polymerase II. During transcription termination, cleavage at the polyadenylation site liberates a 5' fragment which is subsequently processed to form the mature mRNA and a 3' fragment which remains attached to the elongating polymerase. The processive degradation of this 3' fragment by this protein may promote termination of transcription. Binds to RNA polymerase II (RNAp II) transcription termination R-loops formed by G-rich pause sites. The protein is 5'-3' exoribonuclease 2 (XRN2) of Homo sapiens (Human).